The primary structure comprises 567 residues: Dynein, 70 kDa intermediate chain, flagellar outer arm (567 aa).

WD repeat units follow at residues 214–254 (VPTS…GPVE), 261–302 (SHRD…ECVE), 360–399 (GHHG…KTPI), and 404–444 (YHPT…NEPT).

It belongs to the dynein intermediate chain family. In terms of assembly, consists of at least 3 heavy chains (alpha, beta and gamma), 2 intermediate chains and 8 light chains.

It localises to the cytoplasm. The protein localises to the cytoskeleton. Its subcellular location is the flagellum axoneme. In terms of biological role, may play a role in regulating dynein heavy chain (DHC) activity. May function in holding IC78 to the DHC, or in stabilizing the entire dynein complex. This Chlamydomonas reinhardtii (Chlamydomonas smithii) protein is Dynein, 70 kDa intermediate chain, flagellar outer arm (ODA6).